A 453-amino-acid chain; its full sequence is Phosphoglucosamine mutase (453 aa).

The active-site Phosphoserine intermediate is the serine 109. Mg(2+) contacts are provided by serine 109, aspartate 246, aspartate 248, and aspartate 250. Position 109 is a phosphoserine (serine 109).

This sequence belongs to the phosphohexose mutase family. Requires Mg(2+) as cofactor. In terms of processing, activated by phosphorylation.

It carries out the reaction alpha-D-glucosamine 1-phosphate = D-glucosamine 6-phosphate. Its function is as follows. Catalyzes the conversion of glucosamine-6-phosphate to glucosamine-1-phosphate. The chain is Phosphoglucosamine mutase from Leifsonia xyli subsp. xyli (strain CTCB07).